A 100-amino-acid polypeptide reads, in one-letter code: uncharacterized protein (100 aa).

Belongs to the csb family.

This is an uncharacterized protein from Dictyostelium discoideum (Social amoeba).